Here is a 242-residue protein sequence, read N- to C-terminus: Carbendazim hydrolyzing esterase (242 aa).

S77 (acyl-ester intermediate) is an active-site residue.

The protein belongs to the AB hydrolase superfamily.

The protein localises to the secreted. The enzyme catalyses carbendazim + H2O = 2-aminobenzimidazole + methanol + CO2. The catalysed reaction is carbendazim + H2O = N-(1H-1,3-benzodiazol-2-yl)carbamate + methanol + H(+). It catalyses the reaction N-(1H-1,3-benzodiazol-2-yl)carbamate + H(+) = 2-aminobenzimidazole + CO2. Its function is as follows. Catalyzes the hydrolysis of the fungicide carbendazim (methyl-1H-benzimidazol-2-ylcarbamate or MBC) to 2-aminobenzimidazole (2-AB). Following hydrolysis of the carbamate ester, the carbamate decarboxylates spontaneously. Can hydrolyze model carboxylesters such as methyl salicylate, alpha-naphthyl acetate and p-nitrophenyl acetate. In addition, shows substantial hydrolytic activity in vitro against widespread pollutants with carboxylester, carbamate and amide linkages, such as dimethyl phthalate, propanil and chlorpropham. In Nocardioides sp. (strain SG-4G), this protein is Carbendazim hydrolyzing esterase.